Here is a 186-residue protein sequence, read N- to C-terminus: dTTP/UTP pyrophosphatase (186 aa).

Aspartate 66 acts as the Proton acceptor in catalysis.

It belongs to the Maf family. YhdE subfamily. Requires a divalent metal cation as cofactor.

The protein resides in the cytoplasm. It catalyses the reaction dTTP + H2O = dTMP + diphosphate + H(+). The catalysed reaction is UTP + H2O = UMP + diphosphate + H(+). Nucleoside triphosphate pyrophosphatase that hydrolyzes dTTP and UTP. May have a dual role in cell division arrest and in preventing the incorporation of modified nucleotides into cellular nucleic acids. The protein is dTTP/UTP pyrophosphatase of Pyrococcus horikoshii (strain ATCC 700860 / DSM 12428 / JCM 9974 / NBRC 100139 / OT-3).